Consider the following 389-residue polypeptide: Dirigent protein 25 (389 aa).

Positions 1–21 (MAGCKVLFFLILALAITFVSA) are cleaved as a signal peptide. Composition is skewed to low complexity over residues 50 to 68 (GPFPTANSGPATGIASGTG), 77 to 86 (LGTNTGPGPL), and 98 to 135 (SSGTLPVTGPGPLPTSSGLLPGASSGNLPGSGSGPLPT). The disordered stretch occupies residues 50 to 135 (GPFPTANSGP…PGSGSGPLPT (86 aa)).

This sequence belongs to the plant dirigent protein family. In terms of assembly, homodimer.

It localises to the secreted. Its subcellular location is the extracellular space. The protein resides in the apoplast. Its function is as follows. Dirigent proteins impart stereoselectivity on the phenoxy radical-coupling reaction, yielding optically active lignans from two molecules of coniferyl alcohol in the biosynthesis of lignans, flavonolignans, and alkaloids and thus plays a central role in plant secondary metabolism. The chain is Dirigent protein 25 (DIR25) from Arabidopsis thaliana (Mouse-ear cress).